A 320-amino-acid chain; its full sequence is Cytochrome f (320 aa).

A signal peptide spans 1–35; it reads MQTRNAFSYIKEEITRSISVLLVIYIIIRAPISNA. Heme contacts are provided by tyrosine 36, cysteine 56, cysteine 59, and histidine 60. The helical transmembrane segment at 286–305 threads the bilayer; it reads VQGLLFFLASIIFAQIFLVL.

Belongs to the cytochrome f family. As to quaternary structure, the 4 large subunits of the cytochrome b6-f complex are cytochrome b6, subunit IV (17 kDa polypeptide, petD), cytochrome f and the Rieske protein, while the 4 small subunits are PetG, PetL, PetM and PetN. The complex functions as a dimer. Heme is required as a cofactor.

The protein localises to the plastid. It localises to the chloroplast thylakoid membrane. Component of the cytochrome b6-f complex, which mediates electron transfer between photosystem II (PSII) and photosystem I (PSI), cyclic electron flow around PSI, and state transitions. The polypeptide is Cytochrome f (Lotus japonicus (Lotus corniculatus var. japonicus)).